We begin with the raw amino-acid sequence, 217 residues long: MTLKFEPTQLRAYFVCGTQDVPGQDLNMVVQTALDAGVTAFQYRDKGNSQLTTVERFALGQQLRERCAQAHVPFIVDDDVELALALQADGIHVGQKDDWVTQVIQRVANQMFVGLSCSTLAEVQIANQLEGIAYLGSGPIFPTTSKADADPVVGLTGLRQLVMTASCPVVAIGGITVAQLPAIAATGAAGAAVISMLTRSPDMAATVKAMLTATEGH.

4-amino-2-methyl-5-(diphosphooxymethyl)pyrimidine contacts are provided by residues 42-46 (QYRDK) and Asp-77. Residues Asp-78 and Asp-97 each coordinate Mg(2+). Ser-116 lines the 4-amino-2-methyl-5-(diphosphooxymethyl)pyrimidine pocket. Position 143–145 (143–145 (TTS)) interacts with 2-[(2R,5Z)-2-carboxy-4-methylthiazol-5(2H)-ylidene]ethyl phosphate. 4-amino-2-methyl-5-(diphosphooxymethyl)pyrimidine is bound at residue Lys-146. 2-[(2R,5Z)-2-carboxy-4-methylthiazol-5(2H)-ylidene]ethyl phosphate contacts are provided by residues Gly-174 and 194–195 (IS).

The protein belongs to the thiamine-phosphate synthase family. Mg(2+) serves as cofactor.

It catalyses the reaction 2-[(2R,5Z)-2-carboxy-4-methylthiazol-5(2H)-ylidene]ethyl phosphate + 4-amino-2-methyl-5-(diphosphooxymethyl)pyrimidine + 2 H(+) = thiamine phosphate + CO2 + diphosphate. It carries out the reaction 2-(2-carboxy-4-methylthiazol-5-yl)ethyl phosphate + 4-amino-2-methyl-5-(diphosphooxymethyl)pyrimidine + 2 H(+) = thiamine phosphate + CO2 + diphosphate. The enzyme catalyses 4-methyl-5-(2-phosphooxyethyl)-thiazole + 4-amino-2-methyl-5-(diphosphooxymethyl)pyrimidine + H(+) = thiamine phosphate + diphosphate. It participates in cofactor biosynthesis; thiamine diphosphate biosynthesis; thiamine phosphate from 4-amino-2-methyl-5-diphosphomethylpyrimidine and 4-methyl-5-(2-phosphoethyl)-thiazole: step 1/1. Its function is as follows. Condenses 4-methyl-5-(beta-hydroxyethyl)thiazole monophosphate (THZ-P) and 2-methyl-4-amino-5-hydroxymethyl pyrimidine pyrophosphate (HMP-PP) to form thiamine monophosphate (TMP). In Lactiplantibacillus plantarum (strain ATCC BAA-793 / NCIMB 8826 / WCFS1) (Lactobacillus plantarum), this protein is Thiamine-phosphate synthase.